The primary structure comprises 22 residues: thr operon leader peptide (22 aa).

The protein belongs to the thr operon leader peptide family.

This protein is involved in control of the biosynthesis of threonine. In Yersinia enterocolitica serotype O:8 / biotype 1B (strain NCTC 13174 / 8081), this protein is thr operon leader peptide.